Consider the following 93-residue polypeptide: Cell division protein FtsB (93 aa).

At 1 to 3 (MRV) the chain is on the cytoplasmic side. Residues 4–21 (TLVVLLALFLALQYRLWF) form a helical membrane-spanning segment. Residues 22–93 (GKNSLPDYWR…FFRLVPDRNP (72 aa)) are Periplasmic-facing. Positions 28–75 (DYWRLQQEVSNQKNTNENLERRNQLIYADIEDLREGEDALEERARNEL) form a coiled coil.

Belongs to the FtsB family. In terms of assembly, part of a complex composed of FtsB, FtsL and FtsQ.

Its subcellular location is the cell inner membrane. Essential cell division protein. May link together the upstream cell division proteins, which are predominantly cytoplasmic, with the downstream cell division proteins, which are predominantly periplasmic. The polypeptide is Cell division protein FtsB (Idiomarina loihiensis (strain ATCC BAA-735 / DSM 15497 / L2-TR)).